A 158-amino-acid polypeptide reads, in one-letter code: Class 10 plant pathogenesis-related protein 2D (158 aa).

Asp8 is a binding site for trans-zeatin. Residues Pro32, Val35, and Ile38 each coordinate Ca(2+). Glu60, His69, Tyr81, and Tyr83 together coordinate trans-zeatin.

Belongs to the BetVI family.

The protein localises to the cytoplasm. The protein resides in the cytosol. In terms of biological role, class II ribonuclease (RNase). Binds to cytokinins. Interacts with melatonin. The polypeptide is Class 10 plant pathogenesis-related protein 2D (Lupinus luteus (European yellow lupine)).